Here is a 142-residue protein sequence, read N- to C-terminus: MAP3K7 C-terminal-like protein (142 aa).

In terms of tissue distribution, ubiquitous.

The polypeptide is MAP3K7 C-terminal-like protein (Map3k7cl) (Mus musculus (Mouse)).